The primary structure comprises 206 residues: Shieldin complex subunit 1 (206 aa).

Composition is skewed to polar residues over residues 1-15 (MATQETTPGSQTEES), 33-43 (RPSQQTNSEAF), and 60-69 (DSSNLNTEQN). Disordered stretches follow at residues 1–21 (MATQETTPGSQTEESNALDLP) and 33–69 (RPSQQTNSEAFSSEEACSIPCSSDVDPDSSNLNTEQN).

Component of the shieldin complex, consisting of SHLD1, SHLD2, SHLD3 and MAD2L2/REV7. Within the complex, SHLD2 forms a scaffold which interacts with a SHLD3-MAD2L2 subcomplex via its N-terminus, and with SHLD1 via its C-terminus. Interacts with ASTE1.

It is found in the chromosome. Functionally, component of the shieldin complex, which plays an important role in repair of DNA double-stranded breaks (DSBs). During G1 and S phase of the cell cycle, the complex functions downstream of TP53BP1 to promote non-homologous end joining (NHEJ) and suppress DNA end resection. Mediates various NHEJ-dependent processes including immunoglobulin class-switch recombination, and fusion of unprotected telomeres. The chain is Shieldin complex subunit 1 from Bos taurus (Bovine).